The sequence spans 455 residues: L-serine dehydratase (455 aa).

It belongs to the iron-sulfur dependent L-serine dehydratase family. [4Fe-4S] cluster serves as cofactor.

It catalyses the reaction L-serine = pyruvate + NH4(+). Its pathway is carbohydrate biosynthesis; gluconeogenesis. This Haemophilus influenzae (strain ATCC 51907 / DSM 11121 / KW20 / Rd) protein is L-serine dehydratase (sdaA).